The sequence spans 1115 residues: Lateral signaling target protein 2 homolog (1115 aa).

Disordered stretches follow at residues 308–488 (PLGS…DSDS), 545–586 (SEDD…PSTS), 600–742 (RLPS…SLSD), and 879–1027 (VQSS…PDGK). Residues 322–361 (NNSSSTTNTSNNNNNNTNNNNSSSGSDCTNNDKTGTTTNT) show a composition bias toward low complexity. The span at 363 to 373 (KPVERLVDHRN) shows a compositional bias: basic and acidic residues. Composition is skewed to low complexity over residues 374 to 417 (NNTT…TPTA) and 425 to 444 (PSHS…NSPA). Residues 449–488 (YDDDDEDDDDDDVHADVEEDEDESGILDSDEHDLNDDSDS) are compositionally biased toward acidic residues. 2 stretches are compositionally biased toward low complexity: residues 558 to 577 (QQQQ…QQQQ) and 600 to 614 (RLPS…SSNN). Phosphoserine occurs at positions 603 and 604. The segment covering 615-628 (QQMTIKSPSEQTTT) has biased composition (polar residues). Over residues 632-655 (SNRHRHHSHHHHHHHHSHHHHHHQ) the composition is skewed to basic residues. Over residues 658–676 (AAVAVAAAQDEQHNNNQPH) the composition is skewed to low complexity. The segment covering 677-706 (SHSHSSSHHHHHNHQSHSHPHRANRSTRKR) has biased composition (basic residues). Composition is skewed to low complexity over residues 714–726 (TITT…GGEQ), 733–742 (DSSTASSLSD), and 881–901 (SSNS…AARS). Position 908 is a phosphoserine (Ser908). 2 stretches are compositionally biased toward low complexity: residues 921–975 (QQQQ…SPVS) and 988–1020 (TTTT…MSPP). The FYVE-type zinc-finger motif lies at 1025-1085 (DGKAPRCMSC…VCRECFMREV (61 aa)). Cys1031, Cys1034, Cys1047, Cys1050, Cys1055, Cys1058, Cys1077, and Cys1080 together coordinate Zn(2+). The interval 1088–1115 (SHSHGQSQSQIHSPTQQAGGRPQAASAS) is disordered. The span at 1090–1100 (SHGQSQSQIHS) shows a compositional bias: low complexity.

This sequence belongs to the lst-2 family.

Its function is as follows. Negative regulator of epidermal growth factor receptor (EGFR) signaling. The sequence is that of Lateral signaling target protein 2 homolog from Drosophila grimshawi (Hawaiian fruit fly).